A 952-amino-acid polypeptide reads, in one-letter code: Calsyntenin-1 (952 aa).

Residues 1-28 (MLRRPAPALARAVRLLLAGLLYGGGVWA) form the signal peptide. Residues 29–830 (ARVNKHKPWL…PHPFAVVPST (802 aa)) lie on the Extracellular side of the membrane. 2 Cadherin domains span residues 38–154 (LEPT…APVF) and 155–255 (KEKS…SPGW). Residue N356 is glycosylated (N-linked (GlcNAc...) asparagine). Residues 831–851 (ATVVIVVCVSFLVFMIILGVF) form a helical membrane-spanning segment. The Cytoplasmic segment spans residues 852–952 (RIRAAHQRTM…LEWDYSTLSY (101 aa)). A disordered region spans residues 886–952 (METYEDQHSS…LEWDYSTLSY (67 aa)). The segment covering 896–930 (EEEEEEEEEEESEDGEEEEDITSAESESSEEEEGG) has biased composition (acidic residues). The segment covering 934 to 952 (GQNTTRQQQLEWDYSTLSY) has biased composition (polar residues).

Belongs to the calsyntenin family. Directly interacts with APBA2. Forms a tripartite complex with APBA2 and APP. Interacts with KLC1. In terms of assembly, interacts with APBB1; this interaction stabilizes AlcICD metabolism. As to quaternary structure, interacts with PSEN1. Post-translationally, proteolytically processed under normal cellular conditions. A primary zeta-cleavage generates a large extracellular (soluble) N-terminal domain (sAlc) and a short C-terminal transmembrane fragment (CTF1). A secondary cleavage catalyzed by presenilin gamma-secretase within the transmembrane domain releases the beta-Alc-alpha chain in the extracellular milieu and produces an intracellular fragment (AlcICD). This processing is strongly suppressed in the tripartite complex formed with APBA2 and APP, which seems to prevent the association with PSEN1. As to expression, preferentially expressed in the retina and brain.

Its subcellular location is the postsynaptic cell membrane. It localises to the endoplasmic reticulum membrane. The protein resides in the golgi apparatus membrane. The protein localises to the cell projection. It is found in the neuron projection. Its subcellular location is the nucleus. Its function is as follows. Postsynaptic adhesion molecule that binds to presynaptic neurexins to mediate both excitatory and inhibitory synapse formation. Promotes synapse development by acting as a cell adhesion molecule at the postsynaptic membrane, which associates with neurexin-alpha at the presynaptic membrane. Also functions as a cargo in axonal anterograde transport by acting as a molecular adapter that promotes KLC1 association with vesicles. Complex formation with APBA2 and APP, stabilizes APP metabolism and enhances APBA2-mediated suppression of beta-APP40 secretion, due to the retardation of intracellular APP maturation. As intracellular fragment AlcICD, suppresses APBB1-dependent transactivation stimulated by APP C-terminal intracellular fragment (AICD), most probably by competing with AICD for APBB1-binding. Functionally, in complex with APBA2 and C99, a C-terminal APP fragment, abolishes C99 interaction with PSEN1 and thus APP C99 cleavage by gamma-secretase, most probably through stabilization of the direct interaction between APBA2 and APP. In Rattus norvegicus (Rat), this protein is Calsyntenin-1 (Clstn1).